Here is a 224-residue protein sequence, read N- to C-terminus: Ras-related protein Rab-32C (224 aa).

Residues 1–22 are disordered; it reads MYSNKNDKDKDKDQNNENNKNN. GTP is bound at residue 35–42; it reads GKLACGKT. Residues 57–65 carry the Effector region motif; that stretch reads YKPTIGVDF. GTP is bound by residues 83–87 and 142–145; these read DIAGQ and NKCD. Positions 203-224 are disordered; the sequence is GFKLSDQSQSTETTPTQSKTCC. Residues 209–224 show a composition bias toward low complexity; it reads QSQSTETTPTQSKTCC. Residues Cys223 and Cys224 are each lipidated (S-geranylgeranyl cysteine).

It belongs to the small GTPase superfamily. Rab family.

The polypeptide is Ras-related protein Rab-32C (rab32C) (Dictyostelium discoideum (Social amoeba)).